The primary structure comprises 282 residues: 4-diphosphocytidyl-2-C-methyl-D-erythritol kinase (282 aa).

Residue Lys13 is part of the active site. 96–106 (PMGGGIGGGSS) contacts ATP. Asp138 is an active-site residue.

This sequence belongs to the GHMP kinase family. IspE subfamily.

The enzyme catalyses 4-CDP-2-C-methyl-D-erythritol + ATP = 4-CDP-2-C-methyl-D-erythritol 2-phosphate + ADP + H(+). It functions in the pathway isoprenoid biosynthesis; isopentenyl diphosphate biosynthesis via DXP pathway; isopentenyl diphosphate from 1-deoxy-D-xylulose 5-phosphate: step 3/6. Catalyzes the phosphorylation of the position 2 hydroxy group of 4-diphosphocytidyl-2C-methyl-D-erythritol. The polypeptide is 4-diphosphocytidyl-2-C-methyl-D-erythritol kinase (Pseudomonas syringae pv. tomato (strain ATCC BAA-871 / DC3000)).